The chain runs to 159 residues: Cytochrome b6-f complex subunit 4 (159 aa).

3 helical membrane passes run 36 to 56, 95 to 115, and 131 to 151; these read LLYI…GLAV, LLGV…PFLE, and TVFL…TLPI.

Belongs to the cytochrome b family. PetD subfamily. In terms of assembly, the 4 large subunits of the cytochrome b6-f complex are cytochrome b6, subunit IV (17 kDa polypeptide, petD), cytochrome f and the Rieske protein, while the 4 small subunits are petG, petL, petM and petN. The complex functions as a dimer.

Its subcellular location is the plastid. It is found in the chloroplast thylakoid membrane. Functionally, component of the cytochrome b6-f complex, which mediates electron transfer between photosystem II (PSII) and photosystem I (PSI), cyclic electron flow around PSI, and state transitions. The sequence is that of Cytochrome b6-f complex subunit 4 from Piper cenocladum (Ant piper).